Consider the following 261-residue polypeptide: Sepiapterin reductase (261 aa).

NADP(+)-binding positions include 16 to 22 (GASRGFG), 44 to 45 (RT), and 71 to 72 (DL). Residues 158–159 (SL) and Tyr171 contribute to the substrate site. NADP(+) is bound at residue Lys175. A substrate-binding site is contributed by Gly200. NADP(+) is bound at residue 202 to 207 (LDTDMH). Asp258 provides a ligand contact to substrate.

It belongs to the sepiapterin reductase family. In terms of assembly, homodimer.

The protein resides in the cytoplasm. The enzyme catalyses L-erythro-7,8-dihydrobiopterin + NADP(+) = L-sepiapterin + NADPH + H(+). It catalyses the reaction (6R)-L-erythro-5,6,7,8-tetrahydrobiopterin + 2 NADP(+) = 6-pyruvoyl-5,6,7,8-tetrahydropterin + 2 NADPH + 2 H(+). Functionally, catalyzes the final one or two reductions in tetra-hydrobiopterin biosynthesis to form 5,6,7,8-tetrahydrobiopterin. In Xenopus tropicalis (Western clawed frog), this protein is Sepiapterin reductase (spr).